A 224-amino-acid polypeptide reads, in one-letter code: LexA repressor (224 aa).

A DNA-binding region (H-T-H motif) is located at residues 31-51; that stretch reads RAEIATELGFRSANAAEEHLQ. Residues S142 and K179 each act as for autocatalytic cleavage activity in the active site.

Belongs to the peptidase S24 family. Homodimer.

It catalyses the reaction Hydrolysis of Ala-|-Gly bond in repressor LexA.. In terms of biological role, represses a number of genes involved in the response to DNA damage (SOS response), including recA and lexA. In the presence of single-stranded DNA, RecA interacts with LexA causing an autocatalytic cleavage which disrupts the DNA-binding part of LexA, leading to derepression of the SOS regulon and eventually DNA repair. The sequence is that of LexA repressor from Albidiferax ferrireducens (strain ATCC BAA-621 / DSM 15236 / T118) (Rhodoferax ferrireducens).